Here is a 302-residue protein sequence, read N- to C-terminus: UDP-N-acetylenolpyruvoylglucosamine reductase (302 aa).

Positions 23–188 constitute an FAD-binding PCMH-type domain; the sequence is KVGGNAEIFF…LKAVFKVNKG (166 aa). The active site involves Arg-168. Catalysis depends on Ser-217, which acts as the Proton donor. Glu-287 is an active-site residue.

This sequence belongs to the MurB family. The cofactor is FAD.

It localises to the cytoplasm. The catalysed reaction is UDP-N-acetyl-alpha-D-muramate + NADP(+) = UDP-N-acetyl-3-O-(1-carboxyvinyl)-alpha-D-glucosamine + NADPH + H(+). The protein operates within cell wall biogenesis; peptidoglycan biosynthesis. In terms of biological role, cell wall formation. This Rickettsia bellii (strain RML369-C) protein is UDP-N-acetylenolpyruvoylglucosamine reductase.